We begin with the raw amino-acid sequence, 348 residues long: MRQPWWKDFTIPDASAIIHQNITIVSIVGEIEVPVSTIDAYERDRLLTGMTLSAQLALGVLTILMVCLLSSSEKRKHPVFVFNSASIVAMCLRAILNIVTICSNSYSILVNYGFILNMVHMYVHVFNILILLLAPVIIFTAEMSMMIQVRIICAHDRKTQRIMTVISACLTVLVLAFWITNMCQQIQYLLWLTPLSSKTIVGYSWPYFIAKILFAFSIIFHSGVFSYKLFRAILIRKKIGQFPFGPMQCILVISCQCLIVPATFTIIDSFIHTYDGFSSMTQCLLIISLPLSSLWASSTALKLQSMKTSSAQGETTEVSIRVDRTFDIKHTPSDDYSISDESETKKWT.

A run of 7 helical transmembrane segments spans residues 46-69, 79-103, 125-141, 162-180, 207-225, 249-267, and 283-301; these read LLTG…VCLL, VFVF…TICS, VFNI…IFTA, IMTV…FWIT, YFIA…SGVF, CILV…FTII, and CLLI…STAL.

It belongs to the G-protein coupled receptor 4 family.

Its subcellular location is the membrane. Receptor for the peptide pheromone P-factor, a mating factor of S.pombe. Pheromone signaling is essential for initiation of meiosis in S.pombe; P-factor signaling alone may be sufficient. This Schizosaccharomyces pombe (strain 972 / ATCC 24843) (Fission yeast) protein is Pheromone P-factor receptor (mam2).